A 248-amino-acid polypeptide reads, in one-letter code: Opiorphin prepropeptide (248 aa).

Positions 1–21 (MKLTFFLGLLALISCFTPSES) are cleaved as a signal peptide. Pyrrolidone carboxylic acid is present on Q22. The tract at residues 150-198 (DTTITTNPPTTATATTSTSTKPTMTISSSTVPISSTPEPATSISAATPA) is disordered. The N-linked (GlcNAc...) asparagine glycan is linked to N218.

It belongs to the PROL1/PROL3 family. Abundantly expressed in lacrimal gland where it found in the secretory endpieces. Also expressed at modest levels in the submandibular gland.

It is found in the secreted. In terms of biological role, opiorphin is an endogenous inhibitor of neprilysin and aminopeptidase N. Inhibits the breakdown of substance P, Mca-BK2 and Met-enkephalin by neprilysin in vitro with IC(50) values of 29 uM, 33 uM and 33 uM respectively. Inhibits the breakdown of Ala-pNA by aminopeptidase N in vitro with an IC(50) of 65 uM. Has a potent analgesic effect when administered to rats by intravenous injection. This Homo sapiens (Human) protein is Opiorphin prepropeptide.